The primary structure comprises 360 residues: Phospho-N-acetylmuramoyl-pentapeptide-transferase (360 aa).

10 helical membrane passes run 25 to 45 (RGILGVLTALTLSLCLGPWMI), 73 to 93 (TMGGALILSSIGISTLLWADL), 97 to 117 (YVWVVLLVTFLFGAIGWVDDY), 135 to 155 (FWQSVFGLCAAIFLYTTAPSA), 170 to 190 (IPLGIGFIVLTYFVIVGSSNA), 199 to 219 (GLAIMPTVMVGGALGIFCYLS), 236 to 256 (AGELIVFSGALIGAGLGFLWF), 263 to 283 (VFMGDVGALALGAALGTMAVI), 288 to 308 (MVLFIMGGVFVMETLSVVIQV), and 338 to 358 (VIVRFWIITVILVLIGLATLK).

Belongs to the glycosyltransferase 4 family. MraY subfamily. It depends on Mg(2+) as a cofactor.

It localises to the cell inner membrane. The catalysed reaction is UDP-N-acetyl-alpha-D-muramoyl-L-alanyl-gamma-D-glutamyl-meso-2,6-diaminopimeloyl-D-alanyl-D-alanine + di-trans,octa-cis-undecaprenyl phosphate = di-trans,octa-cis-undecaprenyl diphospho-N-acetyl-alpha-D-muramoyl-L-alanyl-D-glutamyl-meso-2,6-diaminopimeloyl-D-alanyl-D-alanine + UMP. It participates in cell wall biogenesis; peptidoglycan biosynthesis. In terms of biological role, catalyzes the initial step of the lipid cycle reactions in the biosynthesis of the cell wall peptidoglycan: transfers peptidoglycan precursor phospho-MurNAc-pentapeptide from UDP-MurNAc-pentapeptide onto the lipid carrier undecaprenyl phosphate, yielding undecaprenyl-pyrophosphoryl-MurNAc-pentapeptide, known as lipid I. In Pseudomonas syringae pv. syringae (strain B728a), this protein is Phospho-N-acetylmuramoyl-pentapeptide-transferase.